We begin with the raw amino-acid sequence, 225 residues long: Uracil-DNA glycosylase 1 (225 aa).

The active-site Proton acceptor is Asp68.

The protein belongs to the uracil-DNA glycosylase (UDG) superfamily. UNG family.

The protein resides in the cytoplasm. The enzyme catalyses Hydrolyzes single-stranded DNA or mismatched double-stranded DNA and polynucleotides, releasing free uracil.. In terms of biological role, excises uracil residues from the DNA which can arise as a result of misincorporation of dUMP residues by DNA polymerase or due to deamination of cytosine. The sequence is that of Uracil-DNA glycosylase 1 (ung1) from Streptomyces coelicolor (strain ATCC BAA-471 / A3(2) / M145).